The following is a 262-amino-acid chain: Hydroxyethylthiazole kinase (262 aa).

Met-43 contributes to the substrate binding site. Residues Arg-118 and Thr-164 each contribute to the ATP site. Ala-191 lines the substrate pocket.

It belongs to the Thz kinase family. Requires Mg(2+) as cofactor.

The enzyme catalyses 5-(2-hydroxyethyl)-4-methylthiazole + ATP = 4-methyl-5-(2-phosphooxyethyl)-thiazole + ADP + H(+). Its pathway is cofactor biosynthesis; thiamine diphosphate biosynthesis; 4-methyl-5-(2-phosphoethyl)-thiazole from 5-(2-hydroxyethyl)-4-methylthiazole: step 1/1. Its function is as follows. Catalyzes the phosphorylation of the hydroxyl group of 4-methyl-5-beta-hydroxyethylthiazole (THZ). In Cereibacter sphaeroides (strain ATCC 17023 / DSM 158 / JCM 6121 / CCUG 31486 / LMG 2827 / NBRC 12203 / NCIMB 8253 / ATH 2.4.1.) (Rhodobacter sphaeroides), this protein is Hydroxyethylthiazole kinase.